A 259-amino-acid polypeptide reads, in one-letter code: Protein odd-skipped-related 1 (259 aa).

3 consecutive C2H2-type zinc fingers follow at residues 168–190 (FVCK…ERTH), 196–218 (YTCD…RYIH), and 224–246 (FKCQ…KTLH).

Belongs to the Odd C2H2-type zinc-finger protein family. In terms of tissue distribution, at early gastrula stage, expressed in the involuting mesoderm and endoderm. During neurulation, expressed in the pronephric primordium, following expression of osr2. During tailbud (stage 35), expressed in the rectal diverticulum and in the kidney ducts.

The protein resides in the nucleus. Transcriptional repressor. Required for pronephric kidney development. This Xenopus laevis (African clawed frog) protein is Protein odd-skipped-related 1.